A 203-amino-acid chain; its full sequence is MSRKSLVFVTGNQNKLKEVVAILGDAFPWKVESKDIDLPEFQGEPDEISEEKCKIAAIKIAGPVIVEDTCLCFNAFGGLPGPYIKWFLKKLGPEGLHRMLTGWEDKTAYALCTFAYSSGKPDDPVLLFRGKTMGQIVEPRGPRNFGWDPCFQPDGFHQTYAEMASEVKNGISHRGKALQALKDHFLSLSEPDIKKAKCDEHER.

Thr-10 to Lys-15 serves as a coordination point for ITP. Glu-40 contacts Mg(2+). ITP contacts are provided by residues Lys-52, Asp-68–Thr-69, Lys-85, Phe-145–Asp-148, Lys-168, and His-173–Arg-174.

Belongs to the HAM1 NTPase family. Homodimer. Mg(2+) is required as a cofactor. Mn(2+) serves as cofactor.

It is found in the cytoplasm. The enzyme catalyses ITP + H2O = IMP + diphosphate + H(+). It carries out the reaction dITP + H2O = dIMP + diphosphate + H(+). The catalysed reaction is XTP + H2O = XMP + diphosphate + H(+). Pyrophosphatase that hydrolyzes non-canonical purine nucleotides such as inosine triphosphate (ITP), deoxyinosine triphosphate (dITP) or xanthosine 5'-triphosphate (XTP) to their respective monophosphate derivatives. The enzyme does not distinguish between the deoxy- and ribose forms. Probably excludes non-canonical purines from RNA and DNA precursor pools, thus preventing their incorporation into RNA and DNA and avoiding chromosomal lesions. The protein is Inosine triphosphate pyrophosphatase of Nematostella vectensis (Starlet sea anemone).